The primary structure comprises 466 residues: Gamma-aminobutyric acid receptor subunit gamma-2 (466 aa).

Positions 1 to 38 are cleaved as a signal peptide; sequence MSSPNTWSTGSTVYSPVFSQKMTLWILLLLSLYPGFTS. Residues 39–274 are Extracellular-facing; the sequence is QKSDDDYEDY…FDLSRRMGYF (236 aa). N51 and N128 each carry an N-linked (GlcNAc...) asparagine glycan. Residues C189 and C203 are joined by a disulfide bond. Residue N246 is glycosylated (N-linked (GlcNAc...) asparagine). The helical transmembrane segment at 275–295 threads the bilayer; sequence TIQTYIPCTLIVVLSWVSFWI. Residues 296–301 are Cytoplasmic-facing; sequence NKDAVP. Residues 302–321 form a helical membrane-spanning segment; sequence ARTSLGITTVLTMTTLSTIA. Residues 322–333 are Extracellular-facing; sequence RKSLPKVSYVTA. A helical membrane pass occupies residues 334–358; sequence MDLFVSVCFIFVFSALVEYGTLHYF. Topologically, residues 359 to 442 are cytoplasmic; that stretch reads VSNRKPSKDK…IHIRIAKMDS (84 aa). The chain crosses the membrane as a helical span at residues 443–463; sequence YARIFFPTAFCLFNLVYWVSY. Residues 464–466 are Extracellular-facing; it reads LYL.

Belongs to the ligand-gated ion channel (TC 1.A.9) family. Gamma-aminobutyric acid receptor (TC 1.A.9.5) subfamily. GABRG2 sub-subfamily. Heteropentamer, formed by a combination of alpha (GABRA1-6), beta (GABRB1-3), gamma (GABRG1-3), delta (GABRD), epsilon (GABRE), rho (GABRR1-3), pi (GABRP) and theta (GABRQ) chains, each subunit exhibiting distinct physiological and pharmacological properties. Interacts with GABARAP. Interacts with KIF21B. Identified in a complex of 720 kDa composed of LHFPL4, NLGN2, GABRA1, GABRB2, GABRG2 and GABRB3. Interacts with LHFPL4. Interacts with SHISA7; interaction leads to the regulation of GABA(A) receptor trafficking, channel deactivation kinetics and pharmacology. Post-translationally, palmitoylated by ZDHHC3/GODZ; required for the accumulation of GABA(A) receptors at the postsynaptic membrane of inhibitory GABAergic synapses. Glycosylated. As to expression, expressed in brain (at protein level). Expressed in lungs, in alveolar epithelium.

The protein resides in the postsynaptic cell membrane. It localises to the cell membrane. The protein localises to the cell projection. It is found in the dendrite. Its subcellular location is the cytoplasmic vesicle membrane. The enzyme catalyses chloride(in) = chloride(out). Its activity is regulated as follows. Allosterically activated by benzodiazepines. Activated by pentobarbital. Inhibited by the antagonist bicuculline. Inhibited by zinc ions. Potentiated by histamine. In terms of biological role, gamma subunit of the heteropentameric ligand-gated chloride channel gated by gamma-aminobutyric acid (GABA), a major inhibitory neurotransmitter in the brain. GABA-gated chloride channels, also named GABA(A) receptors (GABAAR), consist of five subunits arranged around a central pore and contain GABA active binding site(s) located at the alpha and beta subunit interface(s). When activated by GABA, GABAARs selectively allow the flow of chloride anions across the cell membrane down their electrochemical gradient. Gamma-2/GABRG2-containing GABAARs are found at both synaptic and extrasynaptic sites. Chloride influx into the postsynaptic neuron following GABAAR opening decreases the neuron ability to generate a new action potential, thereby reducing nerve transmission. GABAARs containing alpha-1 and beta-2 or -3 subunits exhibit synaptogenic activity; the gamma-2 subunit being necessary but not sufficient to induce rapid synaptic contacts formation. Extrasynaptic gamma-2-containing receptors contribute to the tonic GABAergic inhibition. GABAARs function also as histamine receptor where histamine binds at the interface of two neighboring beta subunits and potentiates GABA response in a gamma-2 subunit-controlled manner. This chain is Gamma-aminobutyric acid receptor subunit gamma-2, found in Rattus norvegicus (Rat).